The chain runs to 129 residues: Glycine cleavage system H protein (129 aa).

Residues 24-106 (IATIGISAFA…YGEGWLVKVR (83 aa)) form the Lipoyl-binding domain. Lysine 65 carries the N6-lipoyllysine modification.

It belongs to the GcvH family. In terms of assembly, the glycine cleavage system is composed of four proteins: P, T, L and H. (R)-lipoate is required as a cofactor.

Functionally, the glycine cleavage system catalyzes the degradation of glycine. The H protein shuttles the methylamine group of glycine from the P protein to the T protein. The sequence is that of Glycine cleavage system H protein from Cyanothece sp. (strain PCC 7425 / ATCC 29141).